Consider the following 337-residue polypeptide: Pantothenate synthetase (337 aa).

M31–H38 is a binding site for ATP. H38 functions as the Proton donor in the catalytic mechanism. Q65 contributes to the (R)-pantoate binding site. Q65 contacts beta-alanine. G152–D155 is a binding site for ATP. A (R)-pantoate-binding site is contributed by Q158. Residues V181 and L189–R192 each bind ATP.

This sequence belongs to the pantothenate synthetase family. Homodimer.

Its subcellular location is the cytoplasm. It catalyses the reaction (R)-pantoate + beta-alanine + ATP = (R)-pantothenate + AMP + diphosphate + H(+). Its pathway is cofactor biosynthesis; (R)-pantothenate biosynthesis; (R)-pantothenate from (R)-pantoate and beta-alanine: step 1/1. Its function is as follows. Catalyzes the condensation of pantoate with beta-alanine in an ATP-dependent reaction via a pantoyl-adenylate intermediate. The chain is Pantothenate synthetase from Streptomyces coelicolor (strain ATCC BAA-471 / A3(2) / M145).